The sequence spans 699 residues: Ubiquitin-like modifier-activating enzyme ATG7 (699 aa).

Residues Gly370 to Gly375 carry the GXGXXG motif motif. Cys550 serves as the catalytic Glycyl thioester intermediate. The segment at Ala653–Glu691 is homodimerization.

It belongs to the ATG7 family. As to quaternary structure, homodimer. Interacts with ATG8 through a thioester bond between Cys-550 and the C-terminal Gly of ATG8 and with ATG12 through a thioester bond between Cys-550 and the C-terminal Gly of ATG12. Also interacts with ATG3.

The protein resides in the cytoplasm. It localises to the preautophagosomal structure. Its function is as follows. E1-like activating enzyme involved in the 2 ubiquitin-like systems required for cytoplasm to vacuole transport (Cvt) and autophagy. Activates ATG12 for its conjugation with ATG5 and ATG8 for its conjugation with phosphatidylethanolamine. Both systems are needed for the ATG8 association to Cvt vesicles and autophagosomes membranes. Autophagy is essential for maintenance of amino acid levels and protein synthesis under nitrogen starvation. Required for selective autophagic degradation of the nucleus (nucleophagy) as well as for mitophagy which contributes to regulate mitochondrial quantity and quality by eliminating the mitochondria to a basal level to fulfill cellular energy requirements and preventing excess ROS production. Required for normal mycelial growth and conidiogenesis. In Sordaria macrospora (strain ATCC MYA-333 / DSM 997 / K(L3346) / K-hell), this protein is Ubiquitin-like modifier-activating enzyme ATG7.